The primary structure comprises 434 residues: Beta-glucuronosyltransferase GlcAT14B (434 aa).

Residues 1-21 (MKKLKSYYMQVRNQQQSLDRK) lie on the Cytoplasmic side of the membrane. A signal-anchor for type II membrane protein transmembrane segment spans residues 22–42 (WILPLAIGSICSLFLLLLTNL). Topologically, residues 43-434 (ASSSGQTRLI…TENFRPRQCR (392 aa)) are lumenal. N-linked (GlcNAc...) asparagine glycosylation is found at Asn-138, Asn-187, Asn-316, and Asn-392.

It belongs to the glycosyltransferase 14 family.

It is found in the golgi apparatus membrane. Functionally, beta-glucuronosyltransferase involved in the biosynthesis of type II arabinogalactan (AG). Modifies both the beta-1,6-linked galactan and beta-1,3-linked galactan present in type II AG. In Arabidopsis thaliana (Mouse-ear cress), this protein is Beta-glucuronosyltransferase GlcAT14B.